Consider the following 528-residue polypeptide: Aurora kinase (528 aa).

2 disordered regions span residues M1–Q35 and I48–Q235. 2 stretches are compositionally biased toward low complexity: residues N18 to N29 and H59 to N94. The span at T95–N104 shows a compositional bias: polar residues. A compositionally biased stretch (low complexity) spans S105 to S120. Polar residues predominate over residues Q129–K155. A compositionally biased stretch (low complexity) spans T185–S230. The Protein kinase domain maps to F242–I515. ATP contacts are provided by residues L248–V256 and K271. The active-site Proton acceptor is D365.

Belongs to the protein kinase superfamily. Ser/Thr protein kinase family. Aurora subfamily.

The protein resides in the nucleus. It localises to the cytoplasm. Its subcellular location is the cytoskeleton. It is found in the spindle. The protein localises to the chromosome. The protein resides in the centromere. It localises to the kinetochore. The enzyme catalyses L-seryl-[protein] + ATP = O-phospho-L-seryl-[protein] + ADP + H(+). The catalysed reaction is L-threonyl-[protein] + ATP = O-phospho-L-threonyl-[protein] + ADP + H(+). Component of the chromosomal passenger complex (CPC), a complex that acts as a key regulator of chromosome segregation and cytokinesis. Has a role in error-correction of aberrent kinetochore-microtubule attachments to ensure that sister kinetochores become bioriented and connect to opposite poles by promoting spindle assembly checkpoint signaling. This Candida albicans (strain SC5314 / ATCC MYA-2876) (Yeast) protein is Aurora kinase (IPL1).